We begin with the raw amino-acid sequence, 379 residues long: Gonadotropin-releasing hormone II receptor (379 aa).

Over 1–40 (MSAGNGTPWGSAVGEEAWAGSGVAVEGSELPTFSTAAKVR) the chain is Extracellular. Residues 41-60 (VGVTIVLFVSSAGGNLAVLW) traverse the membrane as a helical segment. Residues 61–76 (SVTRPQPSQLRPSPVR) are Cytoplasmic-facing. Residues 77-96 (TLFAHLAAADLLVTFVVMPL) form a helical membrane-spanning segment. The Extracellular portion of the chain corresponds to 97–114 (DATWNITVQWLAGDIACR). Residue asparagine 101 is glycosylated (N-linked (GlcNAc...) asparagine). A disulfide bond links cysteine 113 and cysteine 188. Residues 115-136 (TLMFLKLMAMYSAAFLPVVIGL) traverse the membrane as a helical segment. Residues 137 to 160 (DRQAAVLNPLGSRSGVRKLLGAAW) lie on the Cytoplasmic side of the membrane. The chain crosses the membrane as a helical span at residues 161–178 (GLSFLLALPQLFLFHTVH). Residues 179 to 204 (RAGPVPFTQCVTKGSFKARWQETTYN) are Extracellular-facing. Residues 205–224 (LFTFCCLFLLPLIAMAICYS) form a helical membrane-spanning segment. The Cytoplasmic segment spans residues 225 to 278 (RIVLSVSSPQTRKGSHAPAGEFALRRSFDNRPRVCLRALRLALLILLTFILCWT). A helical membrane pass occupies residues 279–297 (PYYLLGLWYWFSPTMLTEV). Residues 298–303 (PPSLSH) lie on the Extracellular side of the membrane. Residues 304 to 323 (ILFLFGLLNAPLDPLLYGAF) traverse the membrane as a helical segment. Residues 324 to 379 (TFGCRRGHQELSIDSSKEGSGRMLQQEIHALRQQEVQKTVTSRSAGETKGISITSI) lie on the Cytoplasmic side of the membrane.

It belongs to the G-protein coupled receptor 1 family. In terms of processing, phosphorylated on the C-terminal cytoplasmic tail.

It is found in the cell membrane. In terms of biological role, receptor for gonadotropin releasing hormone II (GnRH II). This receptor mediates its action by association with G proteins that activate a phosphatidylinositol-calcium second messenger system. In Chlorocebus aethiops (Green monkey), this protein is Gonadotropin-releasing hormone II receptor (GNRHR2).